The sequence spans 122 residues: Cytochrome b-c1 complex subunit 7-1, mitochondrial (122 aa).

It belongs to the UQCRB/QCR7 family. In terms of assembly, component of the ubiquinol-cytochrome c oxidoreductase (cytochrome b-c1 complex, complex III, CIII), a multisubunit enzyme composed of 10 subunits. The complex is composed of 3 respiratory subunits cytochrome b (MT-CYB), cytochrome c1 (CYC1-1 or CYC1-2) and Rieske protein (UCR1-1 or UCR1-2), 2 core protein subunits MPPalpha1 (or MPPalpha2) and MPPB, and 5 low-molecular weight protein subunits QCR7-1 (or QCR7-2), UCRQ-1 (or UCRQ-2), QCR9, UCRY and probably QCR6-1 (or QCR6-2). The complex exists as an obligatory dimer and forms supercomplexes (SCs) in the inner mitochondrial membrane with NADH-ubiquinone oxidoreductase (complex I, CI), resulting in different assemblies (supercomplexes SCI(1)III(2) and SCI(2)III(4)).

Its subcellular location is the mitochondrion inner membrane. Functionally, component of the ubiquinol-cytochrome c oxidoreductase, a multisubunit transmembrane complex that is part of the mitochondrial electron transport chain which drives oxidative phosphorylation. The respiratory chain contains 3 multisubunit complexes succinate dehydrogenase (complex II, CII), ubiquinol-cytochrome c oxidoreductase (cytochrome b-c1 complex, complex III, CIII) and cytochrome c oxidase (complex IV, CIV), that cooperate to transfer electrons derived from NADH and succinate to molecular oxygen, creating an electrochemical gradient over the inner membrane that drives transmembrane transport and the ATP synthase. The cytochrome b-c1 complex catalyzes electron transfer from ubiquinol to cytochrome c, linking this redox reaction to translocation of protons across the mitochondrial inner membrane, with protons being carried across the membrane as hydrogens on the quinol. In the process called Q cycle, 2 protons are consumed from the matrix, 4 protons are released into the intermembrane space and 2 electrons are passed to cytochrome c. The chain is Cytochrome b-c1 complex subunit 7-1, mitochondrial (QCR7-1) from Arabidopsis thaliana (Mouse-ear cress).